The chain runs to 220 residues: Putative O-methyltransferase Mjls_4009 (220 aa).

Residues Val-47, Glu-69, 71–72, Ser-77, Asp-95, and Val-96 contribute to the S-adenosyl-L-methionine site; that span reads GT. Asp-143 lines the substrate pocket. Residue Asp-145 coordinates S-adenosyl-L-methionine.

This sequence belongs to the class I-like SAM-binding methyltransferase superfamily. Cation-dependent O-methyltransferase family.

This Mycobacterium sp. (strain JLS) protein is Putative O-methyltransferase Mjls_4009.